The following is a 483-amino-acid chain: Glutamyl-tRNA(Gln) amidotransferase subunit A (483 aa).

Catalysis depends on charge relay system residues Lys77 and Ser152. The Acyl-ester intermediate role is filled by Ser176.

The protein belongs to the amidase family. GatA subfamily. Heterotrimer of A, B and C subunits.

The catalysed reaction is L-glutamyl-tRNA(Gln) + L-glutamine + ATP + H2O = L-glutaminyl-tRNA(Gln) + L-glutamate + ADP + phosphate + H(+). Its function is as follows. Allows the formation of correctly charged Gln-tRNA(Gln) through the transamidation of misacylated Glu-tRNA(Gln) in organisms which lack glutaminyl-tRNA synthetase. The reaction takes place in the presence of glutamine and ATP through an activated gamma-phospho-Glu-tRNA(Gln). The sequence is that of Glutamyl-tRNA(Gln) amidotransferase subunit A from Shouchella clausii (strain KSM-K16) (Alkalihalobacillus clausii).